Consider the following 201-residue polypeptide: MCAARLAAAAAQSVYAFSARPLAGGEPVSLGSLRGKVLLIENVASLUGTTVRDYTQMNELQRRLGPRGLVVLGFPCNQFGHQENAKNEEILNSLKYVRPGGGFEPNFMLFEKCEVNGAGAHTLFAFLREALPAPSDDATALMTDPKLITWSPVCRNDVAWNFEKFLVGPDGVPLRRYSRRFQTIDIEPDIEALLSQGPSCA.

Residue S32 is modified to Phosphoserine. Residue U47 is part of the active site. Position 47 (U47) is a non-standard amino acid, selenocysteine. Residues K86, K112, and K146 each carry the N6-acetyllysine; alternate modification. Residues K86, K112, and K146 each carry the N6-succinyllysine; alternate modification. Residues S195 and S199 each carry the phosphoserine modification.

It belongs to the glutathione peroxidase family. Homotetramer. Interacts with MIEN1. During periods of oxidative stress, Sec-47 may react with a superoxide radical, irreversibly lose hydroselenide and be converted to dehydroalanine.

The protein localises to the cytoplasm. The protein resides in the mitochondrion. It carries out the reaction 2 glutathione + H2O2 = glutathione disulfide + 2 H2O. The catalysed reaction is a hydroperoxy polyunsaturated fatty acid + 2 glutathione = a hydroxy polyunsaturated fatty acid + glutathione disulfide + H2O. The enzyme catalyses tert-butyl hydroperoxide + 2 glutathione = tert-butanol + glutathione disulfide + H2O. It catalyses the reaction cumene hydroperoxide + 2 glutathione = 2-phenylpropan-2-ol + glutathione disulfide + H2O. It carries out the reaction (13S)-hydroperoxy-(9Z,11E)-octadecadienoate + 2 glutathione = (13S)-hydroxy-(9Z,11E)-octadecadienoate + glutathione disulfide + H2O. The catalysed reaction is (9S)-hydroperoxy-(10E,12Z)-octadecadienoate + 2 glutathione = (9S)-hydroxy-(10E,12Z)-octadecadienoate + glutathione disulfide + H2O. The enzyme catalyses (5S)-hydroperoxy-(6E,8Z,11Z,14Z)-eicosatetraenoate + 2 glutathione = (5S)-hydroxy-(6E,8Z,11Z,14Z)-eicosatetraenoate + glutathione disulfide + H2O. It catalyses the reaction (12S)-hydroperoxy-(5Z,8Z,10E,14Z)-eicosatetraenoate + 2 glutathione = (12S)-hydroxy-(5Z,8Z,10E,14Z)-eicosatetraenoate + glutathione disulfide + H2O. It carries out the reaction (12R)-hydroperoxy-(5Z,8Z,10E,14Z)-eicosatetraenoate + 2 glutathione = (12R)-hydroxy-(5Z,8Z,10E,14Z)-eicosatetraenoate + glutathione disulfide + H2O. The catalysed reaction is (15S)-hydroperoxy-(5Z,8Z,11Z,13E)-eicosatetraenoate + 2 glutathione = (15S)-hydroxy-(5Z,8Z,11Z,13E)-eicosatetraenoate + glutathione disulfide + H2O. The enzyme catalyses (5S)-hydroperoxy-(6E,8Z,11Z,14Z,17Z)-eicosapentaenoate + 2 glutathione = (5S)-hydroxy-(6E,8Z,11Z,14Z,17Z)-eicosapentaenoate + glutathione disulfide + H2O. It catalyses the reaction (12S)-hydroperoxy-(5Z,8Z,10E,14Z,17Z)-eicosapentaenoate + 2 glutathione = (12S)-hydroxy-(5Z,8Z,10E,14Z,17Z)-eicosapentaenoate + glutathione disulfide + H2O. It carries out the reaction (15S)-hydroperoxy-(5Z,8Z,11Z,13E,17Z)-eicosapentaenoate + 2 glutathione = (15S)-hydroxy-(5Z,8Z,11Z,13E,17Z)-eicosapentaenoate + glutathione disulfide + H2O. The catalysed reaction is (15S)-hydroperoxy-(11Z,13E)-eicosadienoate + 2 glutathione = (15S)-hydroxy-(11Z,13E)-eicosadienoate + glutathione disulfide + H2O. The enzyme catalyses (17S)-hydroperoxy-(4Z,7Z,10Z,13Z,15E,19Z)-docosahexaenoate + 2 glutathione = (17S)-hydroxy-(4Z,7Z,10Z,13Z,15E,19Z)-docosahexaenoate + glutathione disulfide + H2O. In terms of biological role, catalyzes the reduction of hydroperoxides in a glutathione-dependent manner thus regulating cellular redox homeostasis. Can reduce small soluble hydroperoxides such as H2O2, cumene hydroperoxide and tert-butyl hydroperoxide, as well as several fatty acid-derived hydroperoxides. In platelets catalyzes the reduction of 12-hydroperoxyeicosatetraenoic acid, the primary product of the arachidonate 12-lipoxygenase pathway. This is Glutathione peroxidase 1 (GPX1) from Pan troglodytes (Chimpanzee).